The sequence spans 299 residues: Phosphatidylinositol-3-phosphatase (299 aa).

The N-terminal stretch at 1–43 (MLRGIQALSRPLTRVYRALAVIGVLAASLLASWVGAVPQVGLA) is a signal peptide.

In terms of assembly, monomer. SapM interacts with host RAB7 via its C-terminus. Requires a metal cation as cofactor.

It localises to the secreted. It is found in the host cytoplasmic vesicle. The protein resides in the host phagosome. The catalysed reaction is a phosphate monoester + H2O = an alcohol + phosphate. It carries out the reaction a 1,2-diacyl-sn-glycero-3-phospho-(1D-myo-inositol-3-phosphate) + H2O = a 1,2-diacyl-sn-glycero-3-phospho-(1D-myo-inositol) + phosphate. Phosphatase activity is inhibited in vitro by low concentrations of several heavy metals (zinc chloride, sodium molybdate, magnesium chloride, and copper sulfate) and moderately high concentrations (&gt;8 mM) of EDTA. Its function is as follows. Virulence factor that plays an important role in blocking phagosome-lysosome fusion and thus participates in the intracellular survival of the pathogen. Acts as a phosphatase that dephosphorylates phosphatidylinositol 3-phosphate (PI3P), a membrane trafficking regulatory lipid essential for phagosomal acquisition of lysosomal constituents. Therefore, SapM eliminates PI3P from the phagosomal membrane by catalyzing its hydrolysis, and thus contributes to inhibition of phagosome maturation. Also interferes with autophagy: SapM blocks autophagosome-lysosome fusion in macrophages by binding to the small GTPase RAB7, which prevents RAB7 from being involved in this process and thus negatively regulates autophagy flux. In vitro, displays phosphatase activity with broad specificity; can dephosphorylate a variety of phosphoester substrates, with the highest activity against phosphoenolpyruvate, glycerophosphate, GTP, NADPH, phosphotyrosine and trehalose-6-phosphate. In contrast, the enzyme exhibits poor activity against glucose-6-phosphate, phosphothreonine, and a number of nucleotides (NADP, ATP, AMP, and GMP). The protein is Phosphatidylinositol-3-phosphatase of Mycobacterium tuberculosis (strain ATCC 25618 / H37Rv).